We begin with the raw amino-acid sequence, 95 residues long: Beta-defensin 132 (95 aa).

An N-terminal signal peptide occupies residues methionine 1 to alanine 22. Cystine bridges form between cysteine 27–cysteine 55, cysteine 35–cysteine 49, and cysteine 39–cysteine 56. The disordered stretch occupies residues histidine 74–serine 95. Residues glutamine 76–lysine 87 show a composition bias toward basic residues.

The protein belongs to the beta-defensin family.

The protein localises to the secreted. In terms of biological role, has antibacterial activity. The chain is Beta-defensin 132 (DEFB132) from Homo sapiens (Human).